A 146-amino-acid chain; its full sequence is Hemoglobin subunit beta-2 (146 aa).

Residues histidine 2 to histidine 146 form the Globin domain. Heme b-binding residues include histidine 63 and histidine 92.

This sequence belongs to the globin family. As to quaternary structure, heterotetramer of two alpha chains and two beta chains. As to expression, red blood cells.

Involved in oxygen transport from the lung to the various peripheral tissues. The sequence is that of Hemoglobin subunit beta-2 from Iguana iguana (Common iguana).